We begin with the raw amino-acid sequence, 85 residues long: Putative membrane protein insertion efficiency factor (85 aa).

The tract at residues 66 to 85 (PLNSGGDDPVPPKLDDNREH) is disordered.

It belongs to the UPF0161 family.

It is found in the cell inner membrane. Could be involved in insertion of integral membrane proteins into the membrane. The protein is Putative membrane protein insertion efficiency factor of Yersinia pestis bv. Antiqua (strain Antiqua).